The primary structure comprises 88 residues: Homeobox protein knotted-1-like 11 (88 aa).

The region spanning 4-24 is the ELK domain; sequence ELKEMLLKKYSGCLSRLRSEF. The homeobox; TALE-type DNA-binding region spans 25–88; it reads LKKRKKGKLP…NQRKRHWKPS (64 aa).

Belongs to the TALE/KNOX homeobox family.

It localises to the nucleus. Probably binds to the DNA sequence 5'-TGAC-3'. This chain is Homeobox protein knotted-1-like 11 (KNOX11), found in Zea mays (Maize).